A 525-amino-acid chain; its full sequence is MSEIWEDAIKSNAWPFVEAKKILDSLNGKVPEKNYVLFETGYGPSGLPHIGTFGENARMVMVQKAFEQLSDISTKLICFSDDMDGLRKVPSNIPNPEMVAGYMDMPLTSIPDPFGECESYGHYMNAKLRSFLDKFGFEYEFYSSTNCYKAGMFDEMLIRVLEKYDEIMELMLPTFREERKATYSPFMPICPKTGKVLQVPIEKWDAKAGTVRYKDEAGNYVEVPVTGGHCKLQWKPDFGMRWAALKVDYEMYGKDHLANARLYSEICRILGGKPPVQLCYELFLDENGEKISKSKGNSISVDDWLKYAPVESMALFMYQNPTRAKRLFFDVIPKNVDEYITFNQKYHLEEDRAKRFANPVYHIHHGNVPKIETFGITYALLLNLTSVCNPSDKSVLWGFISKYEPKATPKTSPYLDHLAEFAIRYYNDFIKAYKSYLAPSEKHKVILQDILDMLSSISDQTEAEAIQKAIYDIGMKAGYENLRDYFKDLYQILLGQSEGPRLGTFIKLYGIKETMKLVEGKLYTR.

The 'HIGH' region signature appears at 44-52 (PSGLPHIGT). A 'KMSKS' region motif is present at residues 290–294 (KISKS). Lysine 293 contacts ATP.

This sequence belongs to the class-I aminoacyl-tRNA synthetase family.

It is found in the cytoplasm. It catalyses the reaction tRNA(Lys) + L-lysine + ATP = L-lysyl-tRNA(Lys) + AMP + diphosphate. The protein is Lysine--tRNA ligase of Rickettsia felis (strain ATCC VR-1525 / URRWXCal2) (Rickettsia azadi).